Here is a 421-residue protein sequence, read N- to C-terminus: Probable pectate lyase C (421 aa).

The signal sequence occupies residues 1–19 (MQPLHTLLALLPLCRSTTA). Asn164 and Asn201 each carry an N-linked (GlcNAc...) asparagine glycan. Arg204 is a catalytic residue. The 36-residue stretch at 257–292 (NENFHGYVENNYYDPDQDGTLNGNELGVSSSNYGGM) folds into the EF-hand domain. Residues Asp270, Asp272, Asp274, Thr276, and Glu281 each contribute to the Ca(2+) site. Residues 353–376 (DFGGVGDLDGGETPTDTDGDGIPD) form a disordered region. Positions 367-376 (TDTDGDGIPD) are enriched in acidic residues.

It belongs to the polysaccharide lyase 1 family. Ca(2+) is required as a cofactor.

The protein resides in the secreted. It carries out the reaction Eliminative cleavage of (1-&gt;4)-alpha-D-galacturonan to give oligosaccharides with 4-deoxy-alpha-D-galact-4-enuronosyl groups at their non-reducing ends.. Pectinolytic enzyme consist of four classes of enzymes: pectin lyase, polygalacturonase, pectin methylesterase and rhamnogalacturonase. Among pectinolytic enzymes, pectin lyase is the most important in depolymerization of pectin, since it cleaves internal glycosidic bonds of highly methylated pectins. Favors pectate, the anion, over pectin, the methyl ester. The polypeptide is Probable pectate lyase C (plyC) (Emericella nidulans (strain FGSC A4 / ATCC 38163 / CBS 112.46 / NRRL 194 / M139) (Aspergillus nidulans)).